A 106-amino-acid polypeptide reads, in one-letter code: MYAIVESGGKQFRVEPGKVFFTERVVGKGEGEEVKLDKVLMVKTDDGKVLVGKPYLENVEIKGTIVEHGRARKVIVGKFRPRKNYRRIKGHRQWYTAIKVEEIQVK.

It belongs to the bacterial ribosomal protein bL21 family. Part of the 50S ribosomal subunit. Contacts protein L20.

Its function is as follows. This protein binds to 23S rRNA in the presence of protein L20. The protein is Large ribosomal subunit protein bL21 of Thermosipho africanus (strain TCF52B).